The chain runs to 248 residues: Flavodoxin/ferredoxin--NADP reductase (248 aa).

An FAD-binding FR-type domain is found at 2–101 (ADWVTGKVTK…SEAAGFFVLD (100 aa)). Residues 50-53 (RAYS), tyrosine 66, 74-76 (KLS), and threonine 116 each bind FAD. NADP(+)-binding positions include 143-144 (AR), 173-174 (SR), arginine 184, 214-216 (NPQ), and aspartate 220. Position 247–248 (247–248 (YW)) interacts with FAD.

This sequence belongs to the ferredoxin--NADP reductase type 1 family. Requires FAD as cofactor.

The protein resides in the cytoplasm. It catalyses the reaction 2 reduced [2Fe-2S]-[ferredoxin] + NADP(+) + H(+) = 2 oxidized [2Fe-2S]-[ferredoxin] + NADPH. The enzyme catalyses reduced [flavodoxin] + NADP(+) = oxidized [flavodoxin] + NADPH + 2 H(+). Transports electrons between flavodoxin or ferredoxin and NADPH. The polypeptide is Flavodoxin/ferredoxin--NADP reductase (fpr) (Shigella flexneri).